The primary structure comprises 545 residues: Glucose-6-phosphate isomerase (545 aa).

Glutamate 351 functions as the Proton donor in the catalytic mechanism. Catalysis depends on residues histidine 382 and lysine 510.

It belongs to the GPI family.

Its subcellular location is the cytoplasm. It catalyses the reaction alpha-D-glucose 6-phosphate = beta-D-fructose 6-phosphate. The protein operates within carbohydrate biosynthesis; gluconeogenesis. It functions in the pathway carbohydrate degradation; glycolysis; D-glyceraldehyde 3-phosphate and glycerone phosphate from D-glucose: step 2/4. Functionally, catalyzes the reversible isomerization of glucose-6-phosphate to fructose-6-phosphate. This chain is Glucose-6-phosphate isomerase, found in Helicobacter acinonychis (strain Sheeba).